Reading from the N-terminus, the 451-residue chain is 1,3-beta-glucanosyltransferase PGA4 (451 aa).

The signal sequence occupies residues 1–18 (MLFRSLVTYLSLVSSVLS). (1,3-beta-D-glucosyl)n is bound at residue Tyr81. An N-linked (GlcNAc...) asparagine glycan is attached at Asn88. (1,3-beta-D-glucosyl)n contacts are provided by residues 108–116 (NTPHSSITR), Asn151, Glu152, and Arg198. The Proton donor role is filled by Glu152. Asn245 carries N-linked (GlcNAc...) asparagine glycosylation. The Nucleophile role is filled by Glu254. Tyr286 provides a ligand contact to (1,3-beta-D-glucosyl)n. The segment at 316–336 (SQFEKTKNPSGDGGYLKSTGG) is disordered. N-linked (GlcNAc...) asparagine glycans are attached at residues Asn347, Asn394, and Asn422. A disordered region spans residues 395–427 (YTSSITASSRASPSQTSQVSSSSATSANSTSSK). Low complexity predominate over residues 396–426 (TSSITASSRASPSQTSQVSSSSATSANSTSS). The GPI-anchor amidated aspartate moiety is linked to residue Asp430. The propeptide at 431 to 451 (AAVEGAGFLSVIALAAGIALL) is removed in mature form.

Belongs to the glycosyl hydrolase 72 family. Post-translationally, the GPI-anchor is attached to the protein in the endoplasmic reticulum and serves to target the protein to the cell surface. There, the glucosamine-inositol phospholipid moiety is cleaved off and the GPI-modified mannoprotein is covalently attached via its lipidless GPI glycan remnant to the 1,6-beta-glucan of the outer cell wall layer.

The protein localises to the secreted. Its subcellular location is the cell wall. The protein resides in the membrane. Splits internally a 1,3-beta-glucan molecule and transfers the newly generated reducing end (the donor) to the non-reducing end of another 1,3-beta-glucan molecule (the acceptor) forming a 1,3-beta linkage, resulting in the elongation of 1,3-beta-glucan chains in the cell wall. Involved in cell wall biosynthesis and morphogenesis. Plays a key role in virulence. This Candida albicans (strain SC5314 / ATCC MYA-2876) (Yeast) protein is 1,3-beta-glucanosyltransferase PGA4 (PGA4).